The sequence spans 428 residues: YTH domain-containing protein ECT1 (428 aa).

The YTH domain maps to 245-382 (AKFFVIKSYS…EHGTKIIKIF (138 aa)). Residues 251-253 (KSY), aspartate 257, 267-268 (WS), asparagine 300, tryptophan 324, tryptophan 329, and tryptophan 337 each bind RNA.

Interacts (via C-terminus) with CIPK1. Expressed in root apex, shoot apex, lateral root primordia, stamens, carpels and trichomes.

Its subcellular location is the nucleus. It is found in the cytoplasm. Specifically recognizes and binds N6-methyladenosine (m6A)-containing RNAs, and regulates mRNA stability. M6A is a modification present at internal sites of mRNAs and some non-coding RNAs and plays a role in mRNA stability and processing. In Arabidopsis thaliana (Mouse-ear cress), this protein is YTH domain-containing protein ECT1.